Here is a 366-residue protein sequence, read N- to C-terminus: Phospho-N-acetylmuramoyl-pentapeptide-transferase (366 aa).

10 helical membrane passes run 3-23 (QIII…PVLI), 52-72 (MGGI…GIVG), 80-100 (LTAS…LGFA), 120-140 (LIGQ…FPNA), 161-181 (LAIG…YILI), 197-217 (LAAG…FWQF), 238-258 (LAIL…WNAA), 262-282 (IFMG…LSVA), 287-307 (LLMI…VIQV), and 341-361 (FWLI…GEWL).

It belongs to the glycosyltransferase 4 family. MraY subfamily. Requires Mg(2+) as cofactor.

It localises to the cell membrane. It carries out the reaction UDP-N-acetyl-alpha-D-muramoyl-L-alanyl-gamma-D-glutamyl-meso-2,6-diaminopimeloyl-D-alanyl-D-alanine + di-trans,octa-cis-undecaprenyl phosphate = di-trans,octa-cis-undecaprenyl diphospho-N-acetyl-alpha-D-muramoyl-L-alanyl-D-glutamyl-meso-2,6-diaminopimeloyl-D-alanyl-D-alanine + UMP. The protein operates within cell wall biogenesis; peptidoglycan biosynthesis. Catalyzes the initial step of the lipid cycle reactions in the biosynthesis of the cell wall peptidoglycan: transfers peptidoglycan precursor phospho-MurNAc-pentapeptide from UDP-MurNAc-pentapeptide onto the lipid carrier undecaprenyl phosphate, yielding undecaprenyl-pyrophosphoryl-MurNAc-pentapeptide, known as lipid I. The sequence is that of Phospho-N-acetylmuramoyl-pentapeptide-transferase from Corynebacterium diphtheriae (strain ATCC 700971 / NCTC 13129 / Biotype gravis).